The sequence spans 355 residues: Peptide chain release factor 1 (355 aa).

Gln231 is modified (N5-methylglutamine).

The protein belongs to the prokaryotic/mitochondrial release factor family. Methylated by PrmC. Methylation increases the termination efficiency of RF1.

It localises to the cytoplasm. Functionally, peptide chain release factor 1 directs the termination of translation in response to the peptide chain termination codons UAG and UAA. This chain is Peptide chain release factor 1, found in Erythrobacter litoralis (strain HTCC2594).